The sequence spans 546 residues: Probable malate:quinone oxidoreductase (546 aa).

This sequence belongs to the MQO family. It depends on FAD as a cofactor.

It catalyses the reaction (S)-malate + a quinone = a quinol + oxaloacetate. The protein operates within carbohydrate metabolism; tricarboxylic acid cycle; oxaloacetate from (S)-malate (quinone route): step 1/1. This Acinetobacter baumannii (strain AB0057) protein is Probable malate:quinone oxidoreductase.